We begin with the raw amino-acid sequence, 596 residues long: Merlin (596 aa).

Ser13 is modified (phosphoserine). Residues 22 to 311 (FTVRIVTMDA…GNHDLFMRRR (290 aa)) enclose the FERM domain. Ser518 is subject to Phosphoserine; by PAK. The disordered stretch occupies residues 560-580 (VLHSESSDRGGPSSKHNTIKK).

In terms of assembly, interacts with NHERF1, HGS and AGAP2. Interacts with SGSM3. Interacts (via FERM domain) with MPP1. Interacts with LAYN. Interacts with WWC1. Interacts with the CUL4A-RBX1-DDB1-VprBP/DCAF1 E3 ubiquitin-protein ligase complex. The unphosphorylated form interacts (via FERM domain) with VPRBP/DCAF1. Interacts (via FERM domain) with NOP53; the interaction is direct. Interacts with SCHIP1; the interaction is direct. Post-translationally, phosphorylation of Ser-518 inhibits nuclear localization by disrupting the intramolecular association of the FERM domain with the C-terminal tail. The dephosphorylation of Ser-518 favors the interaction with NOP53. In terms of processing, ubiquitinated by the CUL4A-RBX1-DDB1-DCAF1/VprBP E3 ubiquitin-protein ligase complex for ubiquitination and subsequent proteasome-dependent degradation.

The protein localises to the cell membrane. Its subcellular location is the cell projection. It is found in the cytoplasm. The protein resides in the cytoskeleton. It localises to the nucleus. Functionally, probable regulator of the Hippo/SWH (Sav/Wts/Hpo) signaling pathway, a signaling pathway that plays a pivotal role in tumor suppression by restricting proliferation and promoting apoptosis. Along with WWC1 can synergistically induce the phosphorylation of LATS1 and LATS2 and can probably function in the regulation of the Hippo/SWH (Sav/Wts/Hpo) signaling pathway. May act as a membrane stabilizing protein. May inhibit PI3 kinase by binding to AGAP2 and impairing its stimulating activity. Suppresses cell proliferation and tumorigenesis by inhibiting the CUL4A-RBX1-DDB1-VprBP/DCAF1 E3 ubiquitin-protein ligase complex. Plays a role in lens development and is required for complete fiber cell terminal differentiation, maintenance of cell polarity and separation of the lens vesicle from the corneal epithelium. In Mus musculus (Mouse), this protein is Merlin (Nf2).